Reading from the N-terminus, the 75-residue chain is Protein Tlp homolog (75 aa).

The interval 52–75 is disordered; it reads RREALDGMREEIKDEARDKKNGYM.

It belongs to the Tlp family.

The chain is Protein Tlp homolog from Clostridium botulinum (strain Okra / Type B1).